The primary structure comprises 129 residues: Intraflagellar transport protein 20 homolog (129 aa).

A coiled-coil region spans residues 89-121 (VLLQMTIRELTVEKERLRVELEAVRKIEKEQDE).

In terms of assembly, component of the IFT complex B composed of at least che-2, che-13, dyf-1, dyf-3, dyf-6, dyf-11, dyf-13, ift-20, ift-74, ift-81, ifta-2, osm-1, osm-5 and osm-6.

The protein resides in the cell projection. It localises to the cilium. In terms of biological role, component of the intraflagellar transport (IFT) complex B required for transport of proteins in the motile cilium. Required for ciliary entrance and transport of specific ciliary cargo proteins such as che-3 which are related to motility. The protein is Intraflagellar transport protein 20 homolog of Caenorhabditis elegans.